The chain runs to 67 residues: uncharacterized protein (67 aa).

The helical transmembrane segment at 26-46 (CYLLFCFLECFLNLFKKCGVF) threads the bilayer.

It belongs to the plectrovirus ORF11 family.

It localises to the host membrane. This is an uncharacterized protein from Spiroplasma virus SpV1-C74 (SpV1).